Consider the following 431-residue polypeptide: MGKTIAQKIFDAHSVDQPFGEVHVIRLDGVFCHEITTPTAICDLMEKNKDRVFDPSKIKAVIDHVTPAKDSKTAAQGKILRQWARRHGIDGFFDIGRNGVCHALFPEQGFVRPGHTIIMGDSHTCTYGAFGAFAAGVGTTDLEVGILKGVCALNYPSTIKVVLNGKLSPGVYAKDVILAVIAELGVNGATNRVIEFTGPCVDAMSMEARMTLCNMAIEAGGTCGICYPDKTTVAYLWEFIKGEYPSRQAALKAFKKLVSDPDADYDRVLEMDISDLSPRVTYGYKPDCVKPVAEMEGTPIDQVYIGSCTNGRLEDLRVAAKVLKGKKVHPSVRGIVSPATPTVFQAALEEGLIATFMAAGFCVTNPTCGACLGMSNGVLAPGEVCLSTTNRNFNGRMGKGGMVHLASPATAAAGAIAGCITNSKLYKKRAE.

Residues cysteine 308, cysteine 368, and cysteine 371 each contribute to the [4Fe-4S] cluster site.

This sequence belongs to the aconitase/IPM isomerase family. LeuC type 2 subfamily. As to quaternary structure, heterodimer of LeuC and LeuD. It depends on [4Fe-4S] cluster as a cofactor.

The catalysed reaction is (2R,3S)-3-isopropylmalate = (2S)-2-isopropylmalate. It participates in amino-acid biosynthesis; L-leucine biosynthesis; L-leucine from 3-methyl-2-oxobutanoate: step 2/4. Functionally, catalyzes the isomerization between 2-isopropylmalate and 3-isopropylmalate, via the formation of 2-isopropylmaleate. This is 3-isopropylmalate dehydratase large subunit from Desulfosudis oleivorans (strain DSM 6200 / JCM 39069 / Hxd3) (Desulfococcus oleovorans).